Reading from the N-terminus, the 356-residue chain is Peritrophin-44 (356 aa).

Residues 1-23 form the signal peptide; it reads MKELQITTGCLLLMVAAIGKTSA. Chitin-binding type-2 domains lie at 28–85, 88–146, 147–201, 220–283, and 286–355; these read SETC…KCIS, KNAC…ECTA, DSIC…PCLA, NFVC…PCTF, and CGNL…YKLC. Cys62 and Cys75 are joined by a disulfide. An N-linked (GlcNAc...) asparagine glycan is attached at Asn114. Intrachain disulfides connect Cys122–Cys135, Cys181–Cys193, and Cys262–Cys273. Asn309 carries N-linked (GlcNAc...) asparagine glycosylation.

In terms of processing, glycosylated. In terms of tissue distribution, larval peritrophic membrane.

Functionally, may have roles in the maintenance of peritrophic membrane structure and in the determination of the porosity of the peritrophic membrane. May bind chitin or related oligosaccharide structures. This chain is Peritrophin-44, found in Lucilia cuprina (Green bottle fly).